The primary structure comprises 567 residues: Proline--tRNA ligase (567 aa).

This sequence belongs to the class-II aminoacyl-tRNA synthetase family. ProS type 1 subfamily. In terms of assembly, homodimer.

It localises to the cytoplasm. It carries out the reaction tRNA(Pro) + L-proline + ATP = L-prolyl-tRNA(Pro) + AMP + diphosphate. Catalyzes the attachment of proline to tRNA(Pro) in a two-step reaction: proline is first activated by ATP to form Pro-AMP and then transferred to the acceptor end of tRNA(Pro). As ProRS can inadvertently accommodate and process non-cognate amino acids such as alanine and cysteine, to avoid such errors it has two additional distinct editing activities against alanine. One activity is designated as 'pretransfer' editing and involves the tRNA(Pro)-independent hydrolysis of activated Ala-AMP. The other activity is designated 'posttransfer' editing and involves deacylation of mischarged Ala-tRNA(Pro). The misacylated Cys-tRNA(Pro) is not edited by ProRS. This Staphylococcus aureus (strain bovine RF122 / ET3-1) protein is Proline--tRNA ligase.